The chain runs to 346 residues: UDP-N-acetylenolpyruvoylglucosamine reductase (346 aa).

Residues 23 to 194 (FDVRAQFACR…TSVTFRLPKV (172 aa)) enclose the FAD-binding PCMH-type domain. Arg170 is an active-site residue. Residue Ser246 is the Proton donor of the active site. Glu342 is a catalytic residue.

It belongs to the MurB family. The cofactor is FAD.

Its subcellular location is the cytoplasm. The enzyme catalyses UDP-N-acetyl-alpha-D-muramate + NADP(+) = UDP-N-acetyl-3-O-(1-carboxyvinyl)-alpha-D-glucosamine + NADPH + H(+). It functions in the pathway cell wall biogenesis; peptidoglycan biosynthesis. Cell wall formation. This is UDP-N-acetylenolpyruvoylglucosamine reductase from Paraburkholderia phytofirmans (strain DSM 17436 / LMG 22146 / PsJN) (Burkholderia phytofirmans).